A 385-amino-acid chain; its full sequence is Pre-mRNA-splicing factor slt-11 (385 aa).

The tract at residues 157–233 (RKGREVDEEG…PPGPKDWLPP (77 aa)) is disordered. The span at 171–187 (GSSSGAGRATGGNPAVG) shows a compositional bias: low complexity. The RRM domain maps to 239–312 (MSLFVTGIED…CPLRVRWSVP (74 aa)). Basic and acidic residues predominate over residues 320 to 331 (KEQRSEMLRDGR). Residues 320-370 (KEQRSEMLRDGRSAFGSGQKTGGQKAIGGQNAQGGASGAQKDDASNLTIAA) are disordered.

Belongs to the SLT11 family. In terms of assembly, associated with the spliceosome.

The protein localises to the nucleus. Functionally, involved in pre-mRNA splicing. Facilitates the cooperative formation of U2/U6 helix II in association with stem II in the spliceosome. Binds to RNA. This is Pre-mRNA-splicing factor slt-11 (slt-11) from Neurospora crassa (strain ATCC 24698 / 74-OR23-1A / CBS 708.71 / DSM 1257 / FGSC 987).